The primary structure comprises 419 residues: Transcription termination factor Rho (419 aa).

Residues 48-123 enclose the Rho RNA-BD domain; that stretch reads EISGDGVLEI…LKVDSINFDR (76 aa). RNA-binding stretches follow at residues 61 to 66, 78 to 80, and 108 to 110; these read GFGFLR, DIY, and ERY. ATP contacts are provided by residues 169–174, 181–186, and arginine 212; these read GKGQRG and KAGKTI. The interval 284-288 is RNA-binding 2; the sequence is VLTGG.

Belongs to the Rho family. As to quaternary structure, homohexamer. The homohexamer assembles into an open ring structure.

Its function is as follows. Facilitates transcription termination by a mechanism that involves Rho binding to the nascent RNA, activation of Rho's RNA-dependent ATPase activity, and release of the mRNA from the DNA template. In Pseudomonas aeruginosa (strain ATCC 15692 / DSM 22644 / CIP 104116 / JCM 14847 / LMG 12228 / 1C / PRS 101 / PAO1), this protein is Transcription termination factor Rho.